The chain runs to 141 residues: Hemoglobin subunit alpha (141 aa).

A Globin domain is found at valine 1 to arginine 141. Serine 3 carries the phosphoserine modification. Residue lysine 7 is modified to N6-succinyllysine. Position 8 is a phosphothreonine (threonine 8). Residue lysine 11 is modified to N6-succinyllysine. The residue at position 16 (lysine 16) is an N6-acetyllysine; alternate. The residue at position 16 (lysine 16) is an N6-succinyllysine; alternate. Tyrosine 24 carries the phosphotyrosine modification. Serine 35 bears the Phosphoserine mark. Residue lysine 40 is modified to N6-succinyllysine. At serine 49 the chain carries Phosphoserine. Residue histidine 58 participates in O2 binding. Histidine 87 lines the heme b pocket. Serine 102 is subject to Phosphoserine. Threonine 108 is subject to Phosphothreonine. Serine 124 is subject to Phosphoserine. A phosphothreonine mark is found at threonine 134 and threonine 137. Serine 138 carries the post-translational modification Phosphoserine.

This sequence belongs to the globin family. In terms of assembly, heterotetramer of two alpha chains and two beta chains. In terms of tissue distribution, red blood cells.

Involved in oxygen transport from the lung to the various peripheral tissues. The protein is Hemoglobin subunit alpha of Blarina brevicauda (Northern short-tailed shrew).